We begin with the raw amino-acid sequence, 180 residues long: Shikimate kinase (180 aa).

Residue 14–19 participates in ATP binding; sequence GAGKSC. Serine 18 contacts Mg(2+). Residues aspartate 36, arginine 60, and glycine 82 each coordinate substrate. Residue arginine 120 participates in ATP binding. Arginine 139 is a substrate binding site.

This sequence belongs to the shikimate kinase family. In terms of assembly, monomer. It depends on Mg(2+) as a cofactor.

The protein localises to the cytoplasm. It carries out the reaction shikimate + ATP = 3-phosphoshikimate + ADP + H(+). It participates in metabolic intermediate biosynthesis; chorismate biosynthesis; chorismate from D-erythrose 4-phosphate and phosphoenolpyruvate: step 5/7. Its function is as follows. Catalyzes the specific phosphorylation of the 3-hydroxyl group of shikimic acid using ATP as a cosubstrate. The polypeptide is Shikimate kinase (Xanthomonas campestris pv. campestris (strain 8004)).